The primary structure comprises 225 residues: MRIVFDIGGSVLVPEDPDIDFIKAIAYELVKISEDHEVAVVVGGGKVARKYIQAAKEFTLNETFKDYIGIHITRANAMLLIAALGEKAYPFVVQDFRKAWEVIQLKKIPIMGGTHPGHTTDAVAALLAEYLQADLLVVVTNVDGVYDSDPKKNPNAKKLDRITVDQLVEIAMQEESKAGGSGVVDALAAKFIQRGKIKTYIVGKKDAYHLFDVIKGKHSGTVVEP.

9–10 (GS) is a binding site for ATP. Glycine 44 serves as a coordination point for UMP. Positions 45 and 49 each coordinate ATP. Residues aspartate 66 and 114–120 (THPGHTT) each bind UMP. The ATP site is built by threonine 140, asparagine 141, tyrosine 146, and aspartate 149.

The protein belongs to the UMP kinase family. Homohexamer.

Its subcellular location is the cytoplasm. The catalysed reaction is UMP + ATP = UDP + ADP. The protein operates within pyrimidine metabolism; CTP biosynthesis via de novo pathway; UDP from UMP (UMPK route): step 1/1. Its activity is regulated as follows. Inhibited by UTP. Functionally, catalyzes the reversible phosphorylation of UMP to UDP. The protein is Uridylate kinase of Thermococcus kodakarensis (strain ATCC BAA-918 / JCM 12380 / KOD1) (Pyrococcus kodakaraensis (strain KOD1)).